Consider the following 232-residue polypeptide: Large ribosomal subunit protein uL1 (232 aa).

Belongs to the universal ribosomal protein uL1 family. In terms of assembly, part of the 50S ribosomal subunit.

In terms of biological role, binds directly to 23S rRNA. The L1 stalk is quite mobile in the ribosome, and is involved in E site tRNA release. Its function is as follows. Protein L1 is also a translational repressor protein, it controls the translation of the L11 operon by binding to its mRNA. This chain is Large ribosomal subunit protein uL1, found in Rhizobium meliloti (strain 1021) (Ensifer meliloti).